A 175-amino-acid polypeptide reads, in one-letter code: Co-chaperone protein HscB homolog (175 aa).

The region spanning 2-74 (NYFQLFNIEV…LQRAEYILVQ (73 aa)) is the J domain.

It belongs to the HscB family. In terms of assembly, interacts with HscA and stimulates its ATPase activity.

In terms of biological role, co-chaperone involved in the maturation of iron-sulfur cluster-containing proteins. Seems to help targeting proteins to be folded toward HscA. The protein is Co-chaperone protein HscB homolog of Colwellia psychrerythraea (strain 34H / ATCC BAA-681) (Vibrio psychroerythus).